We begin with the raw amino-acid sequence, 466 residues long: Flagellum-specific ATP synthase (466 aa).

194–201 (SSSGLGKS) lines the ATP pocket.

Belongs to the ATPase alpha/beta chains family.

The protein resides in the cytoplasm. It carries out the reaction ATP + H2O + 4 H(+)(in) = ADP + phosphate + 5 H(+)(out). Functionally, probable catalytic subunit of a protein translocase for flagellum-specific export, or a proton translocase involved in local circuits at the flagellum. May be involved in a specialized protein export pathway that proceeds without signal peptide cleavage. This is Flagellum-specific ATP synthase (fliI) from Buchnera aphidicola subsp. Schizaphis graminum (strain Sg).